The sequence spans 278 residues: Potassium/proton antiporter CemA (278 aa).

Transmembrane regions (helical) follow at residues 61 to 81 (ILLLFISPVLVNQASKFFVFG), 155 to 175 (AVKNILSDLVSILVFILLMIT), 203 to 223 (IILFTDMFVGFHSPHGWEVII), and 238 to 258 (FIFLFISTFPVILDTIFKYWI).

The protein belongs to the CemA family.

It localises to the plastid. The protein resides in the chloroplast inner membrane. It carries out the reaction K(+)(in) + H(+)(out) = K(+)(out) + H(+)(in). Functionally, contributes to K(+)/H(+) antiport activity by supporting proton efflux to control proton extrusion and homeostasis in chloroplasts in a light-dependent manner to modulate photosynthesis. Prevents excessive induction of non-photochemical quenching (NPQ) under continuous-light conditions. Indirectly promotes efficient inorganic carbon uptake into chloroplasts. In Pyropia yezoensis (Susabi-nori), this protein is Potassium/proton antiporter CemA.